The following is a 264-amino-acid chain: Acid phosphatase (264 aa).

A signal peptide spans 1 to 28 (MIKVPRFICMIALTSGILASGLSQSVSA).

The protein belongs to the class A bacterial acid phosphatase family. Requires Mg(2+) as cofactor. It depends on Zn(2+) as a cofactor.

It localises to the periplasm. The enzyme catalyses a phosphate monoester + H2O = an alcohol + phosphate. This is Acid phosphatase (phoC) from Zymomonas mobilis subsp. mobilis (strain ATCC 31821 / ZM4 / CP4).